We begin with the raw amino-acid sequence, 225 residues long: Ribosomal RNA small subunit methyltransferase G (225 aa).

Residues G96, F101, 146 to 147 (AE), and R160 each bind S-adenosyl-L-methionine.

It belongs to the methyltransferase superfamily. RNA methyltransferase RsmG family.

The protein localises to the cytoplasm. Functionally, specifically methylates the N7 position of a guanine in 16S rRNA. In Mycoplasma mobile (strain ATCC 43663 / 163K / NCTC 11711) (Mesomycoplasma mobile), this protein is Ribosomal RNA small subunit methyltransferase G.